Here is a 226-residue protein sequence, read N- to C-terminus: Cytidylate kinase (226 aa).

Position 9–17 (9–17) interacts with ATP; it reads GPAGAGKST.

It belongs to the cytidylate kinase family. Type 1 subfamily.

Its subcellular location is the cytoplasm. It catalyses the reaction CMP + ATP = CDP + ADP. The catalysed reaction is dCMP + ATP = dCDP + ADP. The sequence is that of Cytidylate kinase from Clostridium tetani (strain Massachusetts / E88).